The chain runs to 560 residues: DNA ligase B (560 aa).

Lys124 (N6-AMP-lysine intermediate) is an active-site residue.

The protein belongs to the NAD-dependent DNA ligase family. LigB subfamily.

It catalyses the reaction NAD(+) + (deoxyribonucleotide)n-3'-hydroxyl + 5'-phospho-(deoxyribonucleotide)m = (deoxyribonucleotide)n+m + AMP + beta-nicotinamide D-nucleotide.. Catalyzes the formation of phosphodiester linkages between 5'-phosphoryl and 3'-hydroxyl groups in double-stranded DNA using NAD as a coenzyme and as the energy source for the reaction. The polypeptide is DNA ligase B (Escherichia coli O1:K1 / APEC).